Reading from the N-terminus, the 305-residue chain is Heme A synthase (305 aa).

The Cytoplasmic portion of the chain corresponds to 1–6; the sequence is MKKFLK. A helical membrane pass occupies residues 7–27; it reads VWSVLTIICMTVVVFGGALVT. Over 28-63 the chain is Extracellular; sequence KTGSADGCGNSWPLCNGQLVRLTDVTPEKLIEFMHR. Residues Cys35 and Cys42 are joined by a disulfide bond. Residue Glu59 is part of the active site. Residue His62 coordinates heme o. Residues 64 to 84 form a helical membrane-spanning segment; the sequence is MTTGISSIFVIVLAICAWIYM. Over 85 to 92 the chain is Cytoplasmic; sequence KNRRETKP. Residues 93–113 form a helical membrane-spanning segment; that stretch reads LAIIAVLFLIIQALMGMAAVV. At 114-122 the chain is on the extracellular side; sequence WGQNPYIMA. A helical membrane pass occupies residues 123–143; the sequence is LHFGISIICYASIVLLALMIF. His124 serves as a coordination point for heme o. Over 144 to 160 the chain is Cytoplasmic; sequence EVDRKFDARNLVMGTKL. Residues 161–181 form a helical membrane-spanning segment; the sequence is RVNIYALTIYTYLAVYTGALV. Over 182–212 the chain is Extracellular; it reads RHEKASMAVPVWPFENGHFIMPTSVQDYVQY. Residues 213–233 traverse the membrane as a helical segment; it reads FHRLAAFILIVWLLYVTWLVF. His214 is a binding site for heme b. The Cytoplasmic segment spans residues 234–240; it reads RDYRRYR. A helical membrane pass occupies residues 241 to 261; that stretch reads VLTFSMVLSLVFIALQAVTGA. At 262 to 271 the chain is on the extracellular side; sequence LSVYTGVNLY. Residues 272 to 292 traverse the membrane as a helical segment; it reads IALAHSLIITMLFALLCYLCL. His276 contributes to the heme b binding site. Over 293 to 305 the chain is Cytoplasmic; it reads LASRSKSNRLRIK.

The protein belongs to the COX15/CtaA family. Type 1 subfamily. Interacts with CtaB. It depends on heme b as a cofactor.

It is found in the cell membrane. It catalyses the reaction Fe(II)-heme o + 2 A + H2O = Fe(II)-heme a + 2 AH2. It participates in porphyrin-containing compound metabolism; heme A biosynthesis; heme A from heme O: step 1/1. In terms of biological role, catalyzes the conversion of heme O to heme A by two successive hydroxylations of the methyl group at C8. The first hydroxylation forms heme I, the second hydroxylation results in an unstable dihydroxymethyl group, which spontaneously dehydrates, resulting in the formyl group of heme A. The chain is Heme A synthase from Listeria monocytogenes serovar 1/2a (strain ATCC BAA-679 / EGD-e).